Here is a 380-residue protein sequence, read N- to C-terminus: MVIVTTFHIDAARDRIINCVKDVRNIVTNQVVPATRKLGSIETTLENFRTETIGGFTTISDCVSLLRNLRSETTRNFNTLLSRTAEPTGQAQTQLRQGFDEPDGHKSEQRTFFSNLDTALNATQALLNHVPPARYTLPPAPLPVNESFGQLHALHLNTLEWLTHINHNLDSMLNMLNPANLMSQGTPLSRLKDAVRTLTQNMNTIQSDQQKILASTSATNHSDILRKLESLDTGLKQLGIRLDVVVSSLNNMSERPPTPSHDTASSSTSTDPNPLPPYQAVHPSLFCRTYGNILYNGIDSRIPMDVTGRPASTSLKLTITVECSEQNTRVNFTLLDDGYILLSDSIETKHKLQHIPSDCLSLIHARCPKFVYKFRGEGLC.

A disordered region spans residues 251–275 (NMSERPPTPSHDTASSSTSTDPNPL). A compositionally biased stretch (low complexity) spans 260-272 (SHDTASSSTSTDP).

This is an uncharacterized protein from Allium cepa var. aggregatum (Shallot).